The sequence spans 723 residues: Polyribonucleotide nucleotidyltransferase (723 aa).

Mg(2+) is bound by residues Asp488 and Asp494. One can recognise a KH domain in the interval 555–614; that stretch reads PKIITLNIKPEKIKDVIGPGGKQINAIIEETGVKIDIEQDGTVYIASQDQAMNRKAIAII. One can recognise an S1 motif domain in the interval 624-692; sequence GEVYTGKVRR…HQGRVNLSRK (69 aa). Positions 692–723 are disordered; sequence KALLEKKEQPEGDKKPQAEKKFYPKTKKPESK. Over residues 693 to 723 the composition is skewed to basic and acidic residues; sequence ALLEKKEQPEGDKKPQAEKKFYPKTKKPESK.

Belongs to the polyribonucleotide nucleotidyltransferase family. The cofactor is Mg(2+).

It is found in the cytoplasm. It carries out the reaction RNA(n+1) + phosphate = RNA(n) + a ribonucleoside 5'-diphosphate. Functionally, involved in mRNA degradation. Catalyzes the phosphorolysis of single-stranded polyribonucleotides processively in the 3'- to 5'-direction. This Listeria innocua serovar 6a (strain ATCC BAA-680 / CLIP 11262) protein is Polyribonucleotide nucleotidyltransferase.